We begin with the raw amino-acid sequence, 420 residues long: Phosphoribosylamine--glycine ligase (420 aa).

The ATP-grasp domain occupies lysine 108 to asparagine 314. Residue leucine 134–serine 195 participates in ATP binding. Residues glutamate 284 and asparagine 286 each coordinate Mg(2+).

This sequence belongs to the GARS family. The cofactor is Mg(2+). Mn(2+) serves as cofactor.

The enzyme catalyses 5-phospho-beta-D-ribosylamine + glycine + ATP = N(1)-(5-phospho-beta-D-ribosyl)glycinamide + ADP + phosphate + H(+). Its pathway is purine metabolism; IMP biosynthesis via de novo pathway; N(1)-(5-phospho-D-ribosyl)glycinamide from 5-phospho-alpha-D-ribose 1-diphosphate: step 2/2. The protein is Phosphoribosylamine--glycine ligase of Listeria innocua serovar 6a (strain ATCC BAA-680 / CLIP 11262).